The sequence spans 184 residues: Protein PLANT CADMIUM RESISTANCE 4 (184 aa).

Positions 1 to 10 are enriched in polar residues; it reads MGRPGSQPNE. The interval 1 to 21 is disordered; the sequence is MGRPGSQPNEAQPPPVQVQPT. Residues 96–116 form a helical membrane-spanning segment; it reads GGLLYGMIFFIGVPFVYSCMF.

Belongs to the cornifelin family.

The protein resides in the membrane. May be involved in heavy metals transport. The chain is Protein PLANT CADMIUM RESISTANCE 4 (PCR4) from Arabidopsis thaliana (Mouse-ear cress).